Consider the following 350-residue polypeptide: Arginine N-succinyltransferase (350 aa).

Position 125 (Leu-125) interacts with succinyl-CoA. His-229 acts as the Proton donor in catalysis.

The protein belongs to the arginine N-succinyltransferase family.

It carries out the reaction succinyl-CoA + L-arginine = N(2)-succinyl-L-arginine + CoA + H(+). It functions in the pathway amino-acid degradation; L-arginine degradation via AST pathway; L-glutamate and succinate from L-arginine: step 1/5. Functionally, catalyzes the transfer of succinyl-CoA to arginine to produce N(2)-succinylarginine. This chain is Arginine N-succinyltransferase, found in Yersinia pseudotuberculosis serotype IB (strain PB1/+).